Here is a 456-residue protein sequence, read N- to C-terminus: Acyl-CoA transferase FPSE_08120 (456 aa).

A mitochondrion-targeting transit peptide spans 1 to 33 (MARLLFSGQRLRPSFLRSYIRANPSSTPSATRA).

This sequence belongs to the CoA-transferase III family.

The protein resides in the mitochondrion. Acyl-CoA transferase; part of the Fusarium detoxification of benzoxazolinone cluster involved in the degradation of benzoxazolinones produced by the host plant. Maize, wheat, and rye produce the 2 benzoxazinone phytoanticipins 2,4-dihy-droxy-7-methoxy-1,4-benzoxazin-3-one (DIMBOA) and 2,4-dihydroxy-1,4-benzoxazin-3-one (DIBOA) that, due to their inherent instability once released, spontaneously degrade to the more stable corresponding benzoxazolinones, 6-methoxy-2-benzoxazolinone (MBOA) and 2-benzoxazolinone (BOA), respectively. The first step in the detoxification of benzoxazolinones involves the hydrolysis of the cyclic ester bond of benzoxazolinones by the gamma-lactamase FDB1 to aminophenols. FDB1 is able to convert 2-benzoxazolinone (BOA) into 2-aminophenol (2-AP), as well as 6-methoxy-2-benzoxazolinone (MBOA) into 5-methoxy-2-aminophenol (2-AMP). The N-malonyltransferase FDB2 then metabolizes aminophenols via N-malonylation to non-toxic malonamic acids. FDB2 converts 2-AP into N-(2-hydroxyphenyl) malonamic acid (HPMA) and 2-AMP into N-(2-hydroxy-4-methoxyphenyl) malonamic acid (HMPMA). The cluster also contains 2 transcription factors (FDB3 and FPSE_08121), an aldo-keto reductase (FPSE_08125) that possibly associates with a ketone component of BOA and MBOA degradation, an esterase (FPSE_08126), an acyl-CoA transferase (FPSE_08120), a solute carrier protein (FPSE_08119) and a transmembrane transporter (FPSE_08127) proposed to shuttle metabolites of benzoxazolinone degradation. The sequence is that of Acyl-CoA transferase FPSE_08120 from Fusarium pseudograminearum (strain CS3096) (Wheat and barley crown-rot fungus).